The chain runs to 189 residues: Alkyl hydroperoxide reductase C (189 aa).

The Thioredoxin domain maps to 2-159 (SLINKEILPF…LVNKIKAAQY (158 aa)). The active-site Cysteine sulfenic acid (-SOH) intermediate is cysteine 49.

The protein belongs to the peroxiredoxin family. AhpC/Prx1 subfamily. As to quaternary structure, homodimer; disulfide-linked, upon oxidation. 5 homodimers assemble to form a ring-like decamer.

It is found in the cytoplasm. It catalyses the reaction a hydroperoxide + NADH + H(+) = an alcohol + NAD(+) + H2O. Thiol-specific peroxidase that catalyzes the reduction of hydrogen peroxide and organic hydroperoxides to water and alcohols, respectively. Plays a role in cell protection against oxidative stress by detoxifying peroxides. This chain is Alkyl hydroperoxide reductase C (ahpC), found in Staphylococcus epidermidis (strain ATCC 12228 / FDA PCI 1200).